Here is a 227-residue protein sequence, read N- to C-terminus: Cytochrome c oxidase subunit 2 (227 aa).

The Mitochondrial intermembrane segment spans residues 1-14; the sequence is MAYPFQLGLQDATS. A helical transmembrane segment spans residues 15-45; sequence PIMEELMNFHDHTLMIVFLISSLVLYIISLM. The Mitochondrial matrix portion of the chain corresponds to 46-59; sequence LTTKLTHTSTMDAQ. A helical membrane pass occupies residues 60 to 87; sequence EVETIWTILPAAILILIALPSLRILYMM. Residues 88–227 lie on the Mitochondrial intermembrane side of the membrane; it reads DEINNPVLTV…YFENWSASMI (140 aa). Residues H161, C196, E198, C200, H204, and M207 each coordinate Cu cation. E198 serves as a coordination point for Mg(2+). Y218 carries the post-translational modification Phosphotyrosine.

This sequence belongs to the cytochrome c oxidase subunit 2 family. Component of the cytochrome c oxidase (complex IV, CIV), a multisubunit enzyme composed of 14 subunits. The complex is composed of a catalytic core of 3 subunits MT-CO1, MT-CO2 and MT-CO3, encoded in the mitochondrial DNA, and 11 supernumerary subunits COX4I, COX5A, COX5B, COX6A, COX6B, COX6C, COX7A, COX7B, COX7C, COX8 and NDUFA4, which are encoded in the nuclear genome. The complex exists as a monomer or a dimer and forms supercomplexes (SCs) in the inner mitochondrial membrane with NADH-ubiquinone oxidoreductase (complex I, CI) and ubiquinol-cytochrome c oxidoreductase (cytochrome b-c1 complex, complex III, CIII), resulting in different assemblies (supercomplex SCI(1)III(2)IV(1) and megacomplex MCI(2)III(2)IV(2)). Found in a complex with TMEM177, COA6, COX18, COX20, SCO1 and SCO2. Interacts with TMEM177 in a COX20-dependent manner. Interacts with COX20. Interacts with COX16. The cofactor is Cu cation.

The protein resides in the mitochondrion inner membrane. It catalyses the reaction 4 Fe(II)-[cytochrome c] + O2 + 8 H(+)(in) = 4 Fe(III)-[cytochrome c] + 2 H2O + 4 H(+)(out). Component of the cytochrome c oxidase, the last enzyme in the mitochondrial electron transport chain which drives oxidative phosphorylation. The respiratory chain contains 3 multisubunit complexes succinate dehydrogenase (complex II, CII), ubiquinol-cytochrome c oxidoreductase (cytochrome b-c1 complex, complex III, CIII) and cytochrome c oxidase (complex IV, CIV), that cooperate to transfer electrons derived from NADH and succinate to molecular oxygen, creating an electrochemical gradient over the inner membrane that drives transmembrane transport and the ATP synthase. Cytochrome c oxidase is the component of the respiratory chain that catalyzes the reduction of oxygen to water. Electrons originating from reduced cytochrome c in the intermembrane space (IMS) are transferred via the dinuclear copper A center (CU(A)) of subunit 2 and heme A of subunit 1 to the active site in subunit 1, a binuclear center (BNC) formed by heme A3 and copper B (CU(B)). The BNC reduces molecular oxygen to 2 water molecules using 4 electrons from cytochrome c in the IMS and 4 protons from the mitochondrial matrix. This chain is Cytochrome c oxidase subunit 2 (MT-CO2), found in Praomys tullbergi (Tullberg's soft-furred rat).